The following is a 79-amino-acid chain: Large ribosomal subunit protein uL30 (79 aa).

It belongs to the universal ribosomal protein uL30 family. Part of the 50S ribosomal subunit.

The chain is Large ribosomal subunit protein uL30 from Anaeromyxobacter sp. (strain Fw109-5).